The primary structure comprises 523 residues: Ubiquilin (523 aa).

Residues V2–P77 form the Ubiquitin-like domain. Residues L70–G99 are disordered. STI1 domains are found at residues V100–M135 and N139–M178. Residues N215 to N227 are compositionally biased toward low complexity. Residues N215–G325 form a disordered region. Over residues P228–P241 the composition is skewed to polar residues. Residues P245 to N278 are compositionally biased toward low complexity. Residues S285–N296 show a composition bias toward gly residues. The span at N297–G310 shows a compositional bias: low complexity. STI1 domains follow at residues D339–M380 and N383–M415. Residues P480–R523 form the UBA domain.

In terms of biological role, stable protein which acts as an antagonist of nosA by repressing cellular differentiation after the tight-aggregate stage, when cells differentiate into two precursor cell types, prespore and prestalk cells, prior to the formation of fruiting bodies. This chain is Ubiquilin (ubqln), found in Dictyostelium discoideum (Social amoeba).